We begin with the raw amino-acid sequence, 415 residues long: Phosphoribosylamine--glycine ligase (415 aa).

Positions 108 to 311 constitute an ATP-grasp domain; sequence KKIMEKYNIP…LMQHIIDLDE (204 aa). Position 134 to 191 (134 to 191) interacts with ATP; that stretch reads IENCELPVVVKKDGLAAGKGVIIADTIEAARSAIEIMYGDEEEGTVVFETFLEGEEFS. Mg(2+) is bound by residues Glu281 and Asn283.

This sequence belongs to the GARS family. Requires Mg(2+) as cofactor. Mn(2+) serves as cofactor.

The catalysed reaction is 5-phospho-beta-D-ribosylamine + glycine + ATP = N(1)-(5-phospho-beta-D-ribosyl)glycinamide + ADP + phosphate + H(+). It functions in the pathway purine metabolism; IMP biosynthesis via de novo pathway; N(1)-(5-phospho-D-ribosyl)glycinamide from 5-phospho-alpha-D-ribose 1-diphosphate: step 2/2. The protein is Phosphoribosylamine--glycine ligase of Staphylococcus aureus (strain MW2).